We begin with the raw amino-acid sequence, 679 residues long: Glycine--tRNA ligase beta subunit (679 aa).

The protein belongs to the class-II aminoacyl-tRNA synthetase family. In terms of assembly, tetramer of two alpha and two beta subunits.

It localises to the cytoplasm. It catalyses the reaction tRNA(Gly) + glycine + ATP = glycyl-tRNA(Gly) + AMP + diphosphate. This Streptococcus pyogenes serotype M49 (strain NZ131) protein is Glycine--tRNA ligase beta subunit.